The primary structure comprises 620 residues: Cryptochrome-1 (620 aa).

In terms of domain architecture, Photolyase/cryptochrome alpha/beta spans 3 to 132; sequence VNAVHWFRKG…EVIVRISHTL (130 aa). Short sequence motifs (LIR) lie at residues 50–54, 82–87, and 151–156; these read NRWRF, DVFPRL, and KRFQTL. Ser-252 serves as a coordination point for FAD. Short sequence motifs (LIR) lie at residues 255 to 260, 271 to 276, 285 to 290, and 335 to 339; these read LRFGCL, DLYKKV, SLYGQL, and TGFPW. Gln-289 is a binding site for FAD. His-355 is a binding site for FAD. The short motif at 379–384 is the LIR 8 element; that stretch reads KVFEEL. Residue 387–389 coordinates FAD; the sequence is DAD. 5 short sequence motifs (LIR) span residues 395–400, 411–416, 430–435, 486–491, and 492–497; these read GSWMWL, HCYCPV, RRYLPV, QIYQQL, and SRYRGL. The disordered stretch occupies residues 593–620; sequence TGISAGKRPNPEEETQSVGPKVQRQSTN.

Belongs to the DNA photolyase class-1 family. Component of the circadian core oscillator, which includes the CRY proteins, CLOCK or NPAS2, BMAL1 or BMAL2, CSNK1E, and the PER proteins. FAD is required as a cofactor. It depends on (6R)-5,10-methylene-5,6,7,8-tetrahydrofolate as a cofactor. As to expression, expressed in the retina.

It is found in the cytoplasm. Its subcellular location is the nucleus. Functionally, transcriptional repressor which forms a core component of the circadian clock. The circadian clock, an internal time-keeping system, regulates various physiological processes through the generation of approximately 24 hour circadian rhythms in gene expression, which are translated into rhythms in metabolism and behavior. It is derived from the Latin roots 'circa' (about) and 'diem' (day) and acts as an important regulator of a wide array of physiological functions including metabolism, sleep, body temperature, blood pressure, endocrine, immune, cardiovascular, and renal function. Consists of two major components: the central clock, residing in the suprachiasmatic nucleus (SCN) of the brain, and the peripheral clocks that are present in nearly every tissue and organ system. Both the central and peripheral clocks can be reset by environmental cues, also known as Zeitgebers (German for 'timegivers'). The predominant Zeitgeber for the central clock is light, which is sensed by retina and signals directly to the SCN. The central clock entrains the peripheral clocks through neuronal and hormonal signals, body temperature and feeding-related cues, aligning all clocks with the external light/dark cycle. Circadian rhythms allow an organism to achieve temporal homeostasis with its environment at the molecular level by regulating gene expression to create a peak of protein expression once every 24 hours to control when a particular physiological process is most active with respect to the solar day. Transcription and translation of core clock components (CLOCK, NPAS2, BMAL1, BMAL2, PER1, PER2, PER3, CRY1 and CRY2) plays a critical role in rhythm generation, whereas delays imposed by post-translational modifications (PTMs) are important for determining the period (tau) of the rhythms (tau refers to the period of a rhythm and is the length, in time, of one complete cycle). A diurnal rhythm is synchronized with the day/night cycle, while the ultradian and infradian rhythms have a period shorter and longer than 24 hours, respectively. Disruptions in the circadian rhythms contribute to the pathology of cardiovascular diseases, cancer, metabolic syndromes and aging. A transcription/translation feedback loop (TTFL) forms the core of the molecular circadian clock mechanism. Transcription factors, CLOCK or NPAS2 and BMAL1 or BMAL2, form the positive limb of the feedback loop, act in the form of a heterodimer and activate the transcription of core clock genes and clock-controlled genes (involved in key metabolic processes), harboring E-box elements (5'-CACGTG-3') within their promoters. The core clock genes: PER1/2/3 and CRY1/2 which are transcriptional repressors form the negative limb of the feedback loop and interact with the CLOCK|NPAS2-BMAL1|BMAL2 heterodimer inhibiting its activity and thereby negatively regulating their own expression. This heterodimer also activates nuclear receptors NR1D1/2 and RORA/B/G, which form a second feedback loop and which activate and repress BMAL1 transcription, respectively. CRY1 and CRY2 have redundant functions but also differential and selective contributions at least in defining the pace of the SCN circadian clock and its circadian transcriptional outputs. More potent transcriptional repressor in cerebellum and liver than CRY2, though more effective in lengthening the period of the SCN oscillator. On its side, CRY2 seems to play a critical role in tuning SCN circadian period by opposing the action of CRY1. With CRY2, is dispensable for circadian rhythm generation but necessary for the development of intercellular networks for rhythm synchrony. Capable of translocating circadian clock core proteins such as PER proteins to the nucleus. Interacts with CLOCK-BMAL1 independently of PER proteins and is found at CLOCK-BMAL1-bound sites, suggesting that CRY may act as a molecular gatekeeper to maintain CLOCK-BMAL1 in a poised and repressed state until the proper time for transcriptional activation. This is Cryptochrome-1 (CRY1) from Erithacus rubecula (European robin).